A 499-amino-acid polypeptide reads, in one-letter code: Alpha-amylase A type-1/2 (499 aa).

An N-terminal signal peptide occupies residues 1–21 (MMVAWWSLFLYGLQVAAPALA). An intrachain disulfide couples C51 to C59. 2 residues coordinate substrate: Q56 and W104. N142 contacts Ca(2+). H143 is a substrate binding site. C171 and C185 form a disulfide bridge. 2 residues coordinate Ca(2+): E183 and D196. N218 carries N-linked (GlcNAc...) asparagine glycosylation. A substrate-binding site is contributed by R225. The Ca(2+) site is built by D227, H231, and E251. Residue D227 is the Nucleophile of the active site. 230-231 (KH) is a binding site for substrate. E251 acts as the Proton donor in catalysis. G255 is a binding site for substrate. C261 and C304 are oxidised to a cystine. Residues D318 and R365 each coordinate substrate. A disulfide bridge links C461 with C496.

The protein belongs to the glycosyl hydrolase 13 family. Monomer. Ca(2+) is required as a cofactor.

It is found in the secreted. It catalyses the reaction Endohydrolysis of (1-&gt;4)-alpha-D-glucosidic linkages in polysaccharides containing three or more (1-&gt;4)-alpha-linked D-glucose units.. The polypeptide is Alpha-amylase A type-1/2 (amy1) (Aspergillus oryzae (strain ATCC 42149 / RIB 40) (Yellow koji mold)).